A 210-amino-acid chain; its full sequence is Large ribosomal subunit protein uL3 (210 aa).

Gln151 bears the N5-methylglutamine mark.

The protein belongs to the universal ribosomal protein uL3 family. Part of the 50S ribosomal subunit. Forms a cluster with proteins L14 and L19. In terms of processing, methylated by PrmB.

Functionally, one of the primary rRNA binding proteins, it binds directly near the 3'-end of the 23S rRNA, where it nucleates assembly of the 50S subunit. This Aeromonas hydrophila subsp. hydrophila (strain ATCC 7966 / DSM 30187 / BCRC 13018 / CCUG 14551 / JCM 1027 / KCTC 2358 / NCIMB 9240 / NCTC 8049) protein is Large ribosomal subunit protein uL3.